The primary structure comprises 1354 residues: Rho-associated protein kinase 1 (1354 aa).

Position 2 is an N-acetylserine (serine 2). Positions 76-338 (YEVVKVIGRG…VEEIKRHLFF (263 aa)) constitute a Protein kinase domain. ATP contacts are provided by residues 82 to 90 (IGRGAFGEV) and lysine 105. Aspartate 198 serves as the catalytic Proton acceptor. Positions 341 to 409 (DQWAWETLRD…YSNRRYLPSA (69 aa)) constitute an AGC-kinase C-terminal domain. The tract at residues 368-727 (FDDLEEDKGD…KKLKEEREAR (360 aa)) is interaction with FHOD1. The stretch at 422–692 (KSLQESLQKT…RLEQEVNEHK (271 aa)) forms a coiled coil. The REM-1 domain occupies 479 to 556 (SAVSQIEKEK…LEEANDLLRT (78 aa)). Positions 707–946 (EAKSVAMCEM…TVSRLEETNS (240 aa)) are SHROOM3 binding. Residues 949–1015 (TKDIEMLRKE…LAEIMNRKDF (67 aa)) enclose the RhoBD domain. Residues 998–1010 (LKTQAVNKLAEIM) are RHOA binding. Positions 1011 to 1102 (NRKDFKIDRK…KLLDLSDSTS (92 aa)) form a coiled coil. A phosphoserine mark is found at serine 1105 and serine 1108. The tract at residues 1115–1354 (NLPESRIEGW…VVKNTSGKTS (240 aa)) is auto-inhibitory. The PH domain occupies 1118–1317 (ESRIEGWLSV…WVTHLVKKIP (200 aa)). The Phorbol-ester/DAG-type zinc finger occupies 1228–1283 (GHEFIPTLYHFPANCEACAKPLWHVFKPPPALECRRCHVKCHRDHLDKKEDLISPC). Serine 1328 carries the post-translational modification Phosphoserine. The segment at 1333–1354 (STRSTANQSFRKVVKNTSGKTS) is disordered.

This sequence belongs to the protein kinase superfamily. AGC Ser/Thr protein kinase family. Homodimer. Interacts with RHOA (activated by GTP), RHOB, RHOC, GEM, MYLC2B, RHOE, PPP1R12A, LIMK1, LIMK2, TSG101, CHORDC1, DAPK3, PFN1 and JIP3. Interacts with FHOD1 in a Src-dependent manner. Interacts with PTEN. Interacts with ITGB1BP1 (via N-terminus and PTB domain). Interacts with SHROOM3. Mg(2+) serves as cofactor. In terms of processing, autophosphorylated on serine and threonine residues. Post-translationally, cleaved by caspase-3 during apoptosis. This leads to constitutive activation of the kinase and membrane blebbing. In terms of tissue distribution, highly expressed in brain, heart, lung, liver, stomach, spleen, kidney, testis, muscle, embryo and placenta.

The protein localises to the cytoplasm. It is found in the cytoskeleton. The protein resides in the microtubule organizing center. It localises to the centrosome. Its subcellular location is the centriole. The protein localises to the golgi apparatus membrane. It is found in the cell projection. The protein resides in the bleb. It localises to the cell membrane. Its subcellular location is the lamellipodium. The protein localises to the ruffle. It catalyses the reaction L-seryl-[protein] + ATP = O-phospho-L-seryl-[protein] + ADP + H(+). The catalysed reaction is L-threonyl-[protein] + ATP = O-phospho-L-threonyl-[protein] + ADP + H(+). Its activity is regulated as follows. Activated by RHOA binding. Inhibited by Y-27632. Functionally, protein kinase which is a key regulator of the actin cytoskeleton and cell polarity. Involved in regulation of smooth muscle contraction, actin cytoskeleton organization, stress fiber and focal adhesion formation, neurite retraction, cell adhesion and motility via phosphorylation of DAPK3, GFAP, LIMK1, LIMK2, MYL9/MLC2, TPPP, PFN1 and PPP1R12A. Phosphorylates FHOD1 and acts synergistically with it to promote SRC-dependent non-apoptotic plasma membrane blebbing. Phosphorylates JIP3 and regulates the recruitment of JNK to JIP3 upon UVB-induced stress. Acts as a suppressor of inflammatory cell migration by regulating PTEN phosphorylation and stability. Acts as a negative regulator of VEGF-induced angiogenic endothelial cell activation. Required for centrosome positioning and centrosome-dependent exit from mitosis. Plays a role in terminal erythroid differentiation. Inhibits podocyte motility via regulation of actin cytoskeletal dynamics and phosphorylation of CFL1. Promotes keratinocyte terminal differentiation. Involved in osteoblast compaction through the fibronectin fibrillogenesis cell-mediated matrix assembly process, essential for osteoblast mineralization. May regulate closure of the eyelids and ventral body wall by inducing the assembly of actomyosin bundles. This is Rho-associated protein kinase 1 (Rock1) from Mus musculus (Mouse).